The following is a 545-amino-acid chain: CTP synthase (545 aa).

The tract at residues 1–266 (MTTNYIFVTG…DDYICKRFSL (266 aa)) is amidoligase domain. S14 lines the CTP pocket. Residue S14 coordinates UTP. ATP is bound by residues 15–20 (SLGKGI) and D72. Mg(2+)-binding residues include D72 and E140. CTP contacts are provided by residues 147–149 (DIE), 187–192 (KTKPTQ), and K223. UTP contacts are provided by residues 187–192 (KTKPTQ) and K223. 239–241 (KDI) is an ATP binding site. The region spanning 291 to 542 (TIGMVGKYVA…VKAAGAYQKR (252 aa)) is the Glutamine amidotransferase type-1 domain. Residue G352 participates in L-glutamine binding. C379 (nucleophile; for glutamine hydrolysis) is an active-site residue. Residues 380 to 383 (LGMQ), E403, and R470 contribute to the L-glutamine site. Active-site residues include H515 and E517.

It belongs to the CTP synthase family. As to quaternary structure, homotetramer.

The catalysed reaction is UTP + L-glutamine + ATP + H2O = CTP + L-glutamate + ADP + phosphate + 2 H(+). It catalyses the reaction L-glutamine + H2O = L-glutamate + NH4(+). It carries out the reaction UTP + NH4(+) + ATP = CTP + ADP + phosphate + 2 H(+). The protein operates within pyrimidine metabolism; CTP biosynthesis via de novo pathway; CTP from UDP: step 2/2. With respect to regulation, allosterically activated by GTP, when glutamine is the substrate; GTP has no effect on the reaction when ammonia is the substrate. The allosteric effector GTP functions by stabilizing the protein conformation that binds the tetrahedral intermediate(s) formed during glutamine hydrolysis. Inhibited by the product CTP, via allosteric rather than competitive inhibition. Functionally, catalyzes the ATP-dependent amination of UTP to CTP with either L-glutamine or ammonia as the source of nitrogen. Regulates intracellular CTP levels through interactions with the four ribonucleotide triphosphates. This Pectobacterium atrosepticum (strain SCRI 1043 / ATCC BAA-672) (Erwinia carotovora subsp. atroseptica) protein is CTP synthase.